We begin with the raw amino-acid sequence, 419 residues long: 3-isopropylmalate dehydratase large subunit (419 aa).

Cys300, Cys360, and Cys363 together coordinate [4Fe-4S] cluster.

Belongs to the aconitase/IPM isomerase family. LeuC type 2 subfamily. In terms of assembly, heterodimer of LeuC and LeuD. Requires [4Fe-4S] cluster as cofactor.

The enzyme catalyses (2R,3S)-3-isopropylmalate = (2S)-2-isopropylmalate. The protein operates within amino-acid biosynthesis; L-leucine biosynthesis; L-leucine from 3-methyl-2-oxobutanoate: step 2/4. In terms of biological role, catalyzes the isomerization between 2-isopropylmalate and 3-isopropylmalate, via the formation of 2-isopropylmaleate. This chain is 3-isopropylmalate dehydratase large subunit, found in Clostridium botulinum (strain Eklund 17B / Type B).